A 588-amino-acid chain; its full sequence is Transmembrane protein 201 homolog (588 aa).

At 1-212 the chain is on the nuclear side; the sequence is MEVAAAVGVI…FFFAGGSTCE (212 aa). The helical transmembrane segment at 213-233 threads the bilayer; sequence ALHFGCLISSIILFLANIDFL. Topologically, residues 234–254 are perinuclear space; sequence QQDAGASLINLPKALQDILPE. Residues 255 to 275 traverse the membrane as a helical segment; the sequence is VYKYSFVINFLIFTTHLIAAF. At 276-280 the chain is on the nuclear side; it reads NNKCR. The chain crosses the membrane as a helical span at residues 281-301; the sequence is VTLPDLLLPILLILAMLTVLT. Residues 302–309 lie on the Perinuclear space side of the membrane; the sequence is SSDNLSQD. A helical transmembrane segment spans residues 310–330; that stretch reads VALVRGACASFSTILSMAVTL. The Nuclear portion of the chain corresponds to 331-564; it reads LPRKKLHKKR…SGAWQCRVIG (234 aa). Residues 378–457 are disordered; the sequence is RRSPHTPSAS…QSTRSSHFKP (80 aa). Low complexity predominate over residues 384-396; sequence PSASPPAMNSSPP. 2 stretches are compositionally biased toward polar residues: residues 418-430 and 441-452; these read NMQSYQTKPNNHV and MAAQSVAQSTRS. Residues 565 to 585 traverse the membrane as a helical segment; that stretch reads ILFALVFIVLIMQIGLFYVLF. The Perinuclear space portion of the chain corresponds to 586–588; that stretch reads TRN.

This sequence belongs to the TMEM201 family.

Its subcellular location is the nucleus inner membrane. In terms of biological role, plays a role in nuclear migration in hypodermal cells. The sequence is that of Transmembrane protein 201 homolog from Caenorhabditis elegans.